Reading from the N-terminus, the 332-residue chain is L-lactate dehydrogenase A chain (332 aa).

Ala2 carries the N-acetylalanine modification. Lys5 carries the post-translational modification N6-acetyllysine; alternate. Lys5 bears the N6-succinyllysine; alternate mark. N6-acetyllysine is present on Lys14. An NAD(+)-binding site is contributed by 29–57; the sequence is GAVGMACAISILMKDLADELALVDVIEDK. At Lys57 the chain carries N6-acetyllysine; alternate. A Glycyl lysine isopeptide (Lys-Gly) (interchain with G-Cter in SUMO2); alternate cross-link involves residue Lys57. Lys81 is subject to N6-acetyllysine. Arg99 lines the NAD(+) pocket. Substrate is bound at residue Arg106. Lys118 carries the post-translational modification N6-acetyllysine; alternate. Position 118 is an N6-succinyllysine; alternate (Lys118). An N6-acetyllysine modification is found at Lys126. Position 138 (Asn138) interacts with NAD(+). Substrate is bound by residues Asn138 and Arg169. His193 functions as the Proton acceptor in the catalytic mechanism. The residue at position 213 (Ser213) is a Phosphoserine. N6-acetyllysine is present on residues Lys224 and Lys232. Tyr239 is modified (phosphotyrosine). Lys243 is subject to N6-acetyllysine. Thr248 serves as a coordination point for substrate. The residue at position 309 (Thr309) is a Phosphothreonine. Position 318 is an N6-acetyllysine; alternate (Lys318). Lys318 is subject to N6-succinyllysine; alternate. Phosphothreonine is present on Thr322.

It belongs to the LDH/MDH superfamily. LDH family. In terms of assembly, homotetramer. Interacts with PTEN upstream reading frame protein MP31. Post-translationally, ISGylated.

It localises to the cytoplasm. The enzyme catalyses (S)-lactate + NAD(+) = pyruvate + NADH + H(+). Its pathway is fermentation; pyruvate fermentation to lactate; (S)-lactate from pyruvate: step 1/1. Its function is as follows. Interconverts simultaneously and stereospecifically pyruvate and lactate with concomitant interconversion of NADH and NAD(+). This chain is L-lactate dehydrogenase A chain (Ldha), found in Rattus norvegicus (Rat).